Reading from the N-terminus, the 331-residue chain is Adenosine deaminase (331 aa).

Residues H12 and H14 each contribute to the Zn(2+) site. H14, D16, and G170 together coordinate substrate. Zn(2+) is bound at residue H197. Residue E200 is the Proton donor of the active site. D278 contributes to the Zn(2+) binding site. Residue D279 participates in substrate binding.

It belongs to the metallo-dependent hydrolases superfamily. Adenosine and AMP deaminases family. Adenosine deaminase subfamily. It depends on Zn(2+) as a cofactor.

It catalyses the reaction adenosine + H2O + H(+) = inosine + NH4(+). The catalysed reaction is 2'-deoxyadenosine + H2O + H(+) = 2'-deoxyinosine + NH4(+). Functionally, catalyzes the hydrolytic deamination of adenosine and 2-deoxyadenosine. The chain is Adenosine deaminase from Shewanella denitrificans (strain OS217 / ATCC BAA-1090 / DSM 15013).